A 183-amino-acid chain; its full sequence is Adenine phosphoribosyltransferase (183 aa).

Belongs to the purine/pyrimidine phosphoribosyltransferase family. In terms of assembly, homodimer.

Its subcellular location is the cytoplasm. It carries out the reaction AMP + diphosphate = 5-phospho-alpha-D-ribose 1-diphosphate + adenine. The protein operates within purine metabolism; AMP biosynthesis via salvage pathway; AMP from adenine: step 1/1. Its function is as follows. Catalyzes a salvage reaction resulting in the formation of AMP, that is energically less costly than de novo synthesis. The protein is Adenine phosphoribosyltransferase of Citrobacter koseri (strain ATCC BAA-895 / CDC 4225-83 / SGSC4696).